The primary structure comprises 312 residues: 4-diphosphocytidyl-2-C-methyl-D-erythritol kinase (312 aa).

Residue Lys10 is part of the active site. An ATP-binding site is contributed by 105–115; that stretch reads PVAGGMAGGSA. The active site involves Asp146.

It belongs to the GHMP kinase family. IspE subfamily.

It catalyses the reaction 4-CDP-2-C-methyl-D-erythritol + ATP = 4-CDP-2-C-methyl-D-erythritol 2-phosphate + ADP + H(+). It participates in isoprenoid biosynthesis; isopentenyl diphosphate biosynthesis via DXP pathway; isopentenyl diphosphate from 1-deoxy-D-xylulose 5-phosphate: step 3/6. Its function is as follows. Catalyzes the phosphorylation of the position 2 hydroxy group of 4-diphosphocytidyl-2C-methyl-D-erythritol. In Corynebacterium glutamicum (strain R), this protein is 4-diphosphocytidyl-2-C-methyl-D-erythritol kinase.